The primary structure comprises 749 residues: Activating signal cointegrator 1 complex subunit 2 (749 aa).

Positions 1-26 are disordered; that stretch reads MPALPLDQLQITHKDPKTGQPKTSAA. Thr233 carries the post-translational modification Phosphothreonine. The CUE domain occupies 465–508; that stretch reads ELDSLISQVKDLLPDLGEGFILACLEHYSYDSEQVINNILEDRL. Disordered stretches follow at residues 606-675 and 689-749; these read EDEY…QDPA and LARK…MIPS. The residue at position 625 (Ser625) is a Phosphoserine. The segment covering 649–662 has biased composition (acidic residues); sequence VQEEEWDEEDEVEE. Basic and acidic residues-rich tracts occupy residues 663 to 675 and 711 to 726; these read EAPKPDHFIQDPA and QSRETTQERRKKEANK.

Belongs to the ASCC2 family. In terms of assembly, identified in the ASCC complex that contains ASCC1, ASCC2 and ASCC3. Interacts directly with ASCC3. The ASCC complex interacts with ALKBH3. Interacts (via CUE domain) with 'Lys-63'-linked polyubiquitin chains, but not with 'Lys-48'-linked polyubiquitin chains. Part of the ASC-1 complex, that contains TRIP4, ASCC1, ASCC2 and ASCC3. Component of the RQT (ribosome quality control trigger) complex, that contains ASCC2, ASCC3 and TRIP4. Interacts with CSRP1. Interacts with PRPF8, a component of the spliceosome. Interacts with ZCCHC4.

It localises to the nucleus. The protein resides in the nucleus speckle. Functionally, ubiquitin-binding protein involved in DNA repair and rescue of stalled ribosomes. Plays a role in DNA damage repair as component of the ASCC complex. Recruits ASCC3 and ALKBH3 to sites of DNA damage by binding to polyubiquitinated proteins that have 'Lys-63'-linked polyubiquitin chains. Part of the ASC-1 complex that enhances NF-kappa-B, SRF and AP1 transactivation. Involved in activation of the ribosome quality control (RQC) pathway, a pathway that degrades nascent peptide chains during problematic translation. Specifically recognizes and binds RPS20/uS10 ubiquitinated by ZNF598, promoting recruitment of the RQT (ribosome quality control trigger) complex on stalled ribosomes, followed by disassembly of stalled ribosomes. In Mus musculus (Mouse), this protein is Activating signal cointegrator 1 complex subunit 2 (Ascc2).